Reading from the N-terminus, the 182-residue chain is Ribulose bisphosphate carboxylase small subunit, chloroplastic (182 aa).

The N-terminal 58 residues, 1 to 58, are a transit peptide targeting the chloroplast; that stretch reads MASSMLSTATVASINRVSPAQATMVAPFTGLKSTPVFPTTRKTNSDITSITSNGGKVQ.

This sequence belongs to the RuBisCO small chain family. In terms of assembly, heterohexadecamer of 8 large and 8 small subunits.

The protein resides in the plastid. Its subcellular location is the chloroplast. Its function is as follows. RuBisCO catalyzes two reactions: the carboxylation of D-ribulose 1,5-bisphosphate, the primary event in carbon dioxide fixation, as well as the oxidative fragmentation of the pentose substrate. Both reactions occur simultaneously and in competition at the same active site. Although the small subunit is not catalytic it is essential for maximal activity. This Manihot esculenta (Cassava) protein is Ribulose bisphosphate carboxylase small subunit, chloroplastic.